Here is a 177-residue protein sequence, read N- to C-terminus: Large ribosomal subunit protein bL17 (177 aa).

The segment at A136–E177 is disordered. Positions E138–E149 are enriched in acidic residues. Low complexity predominate over residues A150–E164.

It belongs to the bacterial ribosomal protein bL17 family. In terms of assembly, part of the 50S ribosomal subunit. Contacts protein L32.

This is Large ribosomal subunit protein bL17 from Bifidobacterium longum (strain NCC 2705).